Reading from the N-terminus, the 301-residue chain is uncharacterized protein (301 aa).

Thr-47 acts as the Charge relay system in catalysis. Tyr-136 functions as the Proton donor in the catalytic mechanism. Residue Lys-165 is the Schiff-base intermediate with substrate of the active site.

This sequence belongs to the DapA family. In terms of assembly, homotetramer.

Its subcellular location is the cytoplasm. This is an uncharacterized protein from Thermofilum pendens (strain DSM 2475 / Hrk 5).